The following is a 302-amino-acid chain: Protein transport protein SEC13 homolog B (302 aa).

WD repeat units follow at residues 9–48, 54–95, 101–142, 148–201, 208–251, and 257–296; these read GHED…GSQQ, GHRG…QWTQ, DHKS…GWDT, AHPV…WKMD, KHTD…EQWE, and DFMT…EWEQ.

The protein belongs to the WD repeat SEC13 family. As to quaternary structure, part of the nuclear pore complex (NPC). The NPC has an eight-fold symmetrical structure comprising a central transport channel and two rings, the cytoplasmic and nuclear rings, to which eight filaments are attached. The cytoplasmic filaments have loose ends, while the nuclear filaments are joined in a distal ring, forming a nuclear basket. NPCs are highly dynamic in configuration and composition, and can be devided in 3 subcomplexes, the NUP62 subcomplex, the NUP107-160 subcomplex and the NUP93 subcomplex, containing approximately 30 different nucleoporin proteins. Interacts with MAG5, SEC31A and SEC31B.

The protein localises to the golgi apparatus. It localises to the endoplasmic reticulum. Its subcellular location is the nucleus envelope. It is found in the nucleus. The protein resides in the nuclear pore complex. Required for protein transport from the endoplasmic reticulum to the Golgi apparatus. This chain is Protein transport protein SEC13 homolog B, found in Arabidopsis thaliana (Mouse-ear cress).